A 232-amino-acid polypeptide reads, in one-letter code: 5'-methylthioadenosine/S-adenosylhomocysteine nucleosidase (232 aa).

The Proton acceptor role is filled by glutamate 12. Residues glycine 78, isoleucine 152, and 173–174 contribute to the substrate site; that span reads ME. The active-site Proton donor is aspartate 197.

The protein belongs to the PNP/UDP phosphorylase family. MtnN subfamily. Homodimer.

It carries out the reaction S-adenosyl-L-homocysteine + H2O = S-(5-deoxy-D-ribos-5-yl)-L-homocysteine + adenine. The enzyme catalyses S-methyl-5'-thioadenosine + H2O = 5-(methylsulfanyl)-D-ribose + adenine. The catalysed reaction is 5'-deoxyadenosine + H2O = 5-deoxy-D-ribose + adenine. It participates in amino-acid biosynthesis; L-methionine biosynthesis via salvage pathway; S-methyl-5-thio-alpha-D-ribose 1-phosphate from S-methyl-5'-thioadenosine (hydrolase route): step 1/2. Catalyzes the irreversible cleavage of the glycosidic bond in both 5'-methylthioadenosine (MTA) and S-adenosylhomocysteine (SAH/AdoHcy) to adenine and the corresponding thioribose, 5'-methylthioribose and S-ribosylhomocysteine, respectively. Also cleaves 5'-deoxyadenosine, a toxic by-product of radical S-adenosylmethionine (SAM) enzymes, into 5-deoxyribose and adenine. Thus, is required for in vivo function of the radical SAM enzymes biotin synthase and lipoic acid synthase, that are inhibited by 5'-deoxyadenosine accumulation. This is 5'-methylthioadenosine/S-adenosylhomocysteine nucleosidase from Escherichia fergusonii (strain ATCC 35469 / DSM 13698 / CCUG 18766 / IAM 14443 / JCM 21226 / LMG 7866 / NBRC 102419 / NCTC 12128 / CDC 0568-73).